The primary structure comprises 316 residues: Probable protein-L-isoaspartate O-methyltransferase (316 aa).

S-adenosyl-L-homocysteine-binding positions include 103 to 106 (ATIS), histidine 111, serine 136, 157 to 158 (EH), 187 to 188 (DG), threonine 263, and glutamine 268. Serine 106 is a catalytic residue.

Belongs to the methyltransferase superfamily. L-isoaspartyl/D-aspartyl protein methyltransferase family.

It is found in the cytoplasm. The protein resides in the cytosol. It catalyses the reaction [protein]-L-isoaspartate + S-adenosyl-L-methionine = [protein]-L-isoaspartate alpha-methyl ester + S-adenosyl-L-homocysteine. Functionally, initiates the repair of damaged proteins by catalyzing methyl esterification of L-isoaspartyl and D-aspartyl residues produced by spontaneous isomerization and racemization of L-aspartyl and L-asparaginyl residues in aging peptides and proteins. This chain is Probable protein-L-isoaspartate O-methyltransferase (pcmA), found in Dictyostelium discoideum (Social amoeba).